We begin with the raw amino-acid sequence, 371 residues long: Queuine tRNA-ribosyltransferase (371 aa).

Residue aspartate 90 is the Proton acceptor of the active site. Residues 90–94, aspartate 144, glutamine 188, and glycine 215 contribute to the substrate site; that span reads DSGGF. The segment at 246-252 is RNA binding; the sequence is GVGTPED. Aspartate 265 serves as the catalytic Nucleophile. Residues 270–274 form an RNA binding; important for wobble base 34 recognition region; sequence TRNAR. Positions 303, 305, 308, and 334 each coordinate Zn(2+).

This sequence belongs to the queuine tRNA-ribosyltransferase family. In terms of assembly, homodimer. Within each dimer, one monomer is responsible for RNA recognition and catalysis, while the other monomer binds to the replacement base PreQ1. Zn(2+) is required as a cofactor.

It carries out the reaction 7-aminomethyl-7-carbaguanine + guanosine(34) in tRNA = 7-aminomethyl-7-carbaguanosine(34) in tRNA + guanine. Its pathway is tRNA modification; tRNA-queuosine biosynthesis. Its function is as follows. Catalyzes the base-exchange of a guanine (G) residue with the queuine precursor 7-aminomethyl-7-deazaguanine (PreQ1) at position 34 (anticodon wobble position) in tRNAs with GU(N) anticodons (tRNA-Asp, -Asn, -His and -Tyr). Catalysis occurs through a double-displacement mechanism. The nucleophile active site attacks the C1' of nucleotide 34 to detach the guanine base from the RNA, forming a covalent enzyme-RNA intermediate. The proton acceptor active site deprotonates the incoming PreQ1, allowing a nucleophilic attack on the C1' of the ribose to form the product. After dissociation, two additional enzymatic reactions on the tRNA convert PreQ1 to queuine (Q), resulting in the hypermodified nucleoside queuosine (7-(((4,5-cis-dihydroxy-2-cyclopenten-1-yl)amino)methyl)-7-deazaguanosine). The sequence is that of Queuine tRNA-ribosyltransferase from Neisseria meningitidis serogroup A / serotype 4A (strain DSM 15465 / Z2491).